The following is a 430-amino-acid chain: uncharacterized protein (430 aa).

The next 10 helical transmembrane spans lie at 13-33 (FFAALASQMGTTVGNMAFAFF), 47-67 (LAELMYSLPTIFVFLIVGVVA), 88-108 (VVLFFTLFTGNIPLVFCILFI), 138-158 (GLNQMLFSIFMVFGVGIGAFM), 228-248 (LIFGFFIFGFVNGGFAVLPMF), 264-284 (SVFTIALGFGLLAGSVIGTLI), 296-316 (IPIFIAGLLIFVLGYTNILWV), 319-339 (AAAFALGMCIGPINIAIGGWM), 358-378 (FMMFAQSLTLGLVALLFPKFV), and 383-403 (YLYYGMGVIILLVFIFYFIAL).

This sequence belongs to the major facilitator superfamily.

The protein localises to the cell membrane. This is an uncharacterized protein from Bacillus subtilis (strain 168).